The following is a 213-amino-acid chain: Large ribosomal subunit protein uL23 (213 aa).

The interval methionine 1–glutamate 117 is large ribosomal subunit protein uL23. The interval lysine 118–valine 213 is unknown.

It belongs to the universal ribosomal protein uL23 family. In terms of assembly, part of the 50S ribosomal subunit. Contacts protein L29, and trigger factor when it is bound to the ribosome.

In terms of biological role, one of the early assembly proteins it binds 23S rRNA. One of the proteins that surrounds the polypeptide exit tunnel on the outside of the ribosome. Forms the main docking site for trigger factor binding to the ribosome. This Mycoplasma mobile (strain ATCC 43663 / 163K / NCTC 11711) (Mesomycoplasma mobile) protein is Large ribosomal subunit protein uL23.